We begin with the raw amino-acid sequence, 360 residues long: Decorin (360 aa).

Positions 1-16 are cleaved as a signal peptide; it reads MKATIIFFLVAQVSWA. Positions 17-30 are excised as a propeptide; that stretch reads GPFQQKGLFDFMLE. O-linked (Xyl...) (glycosaminoglycan) serine glycosylation occurs at serine 34. 2 disulfide bridges follow: cysteine 55–cysteine 61 and cysteine 59–cysteine 68. LRR repeat units lie at residues 74 to 94, 95 to 118, 119 to 142, 143 to 163, 164 to 187, 188 to 213, 214 to 234, 235 to 258, 259 to 282, 283 to 305, 306 to 335, and 336 to 360; these read EKVPKDLPPDTALLDLQNNKI, TEIKDGDFKNLKNLHTLILINNKI, SKISPGAFAPLVKLERLYLSKNQL, KELPEKMPKTLQELRVHENEI, TKVRKSVFNGLNQMIVVELGTNPL, KSSGIENGAFQGMKKLSYIRIADTNI, TTIPQGLPPSLTELHLDGNKI, TKVDAASLKGLNNLAKLGLSFNSI, SAVDNGSLANTPHLRELHLNNNKL, VKVPGGLADHKYIQVVYLHNNNI, SAIGSNDFCPPGYNTKKASYSGVSLFSNPV, and QYWEIQPSTFRCVYVRAAVQLGNYK. Asparagine 212 carries N-linked (GlcNAc...) asparagine glycosylation. Residues asparagine 263 and asparagine 304 are each glycosylated (N-linked (GlcNAc...) asparagine). A disulfide bond links cysteine 314 and cysteine 347.

The protein belongs to the small leucine-rich proteoglycan (SLRP) family. SLRP class I subfamily. In terms of assembly, binds to type I and type II collagen, fibronectin and TGF-beta. Forms a ternary complex with MFAP2 and ELN. Interacts with DPT. The attached glycosaminoglycan chain can be either chondroitin sulfate or dermatan sulfate depending upon the tissue of origin.

It localises to the secreted. The protein resides in the extracellular space. The protein localises to the extracellular matrix. Functionally, may affect the rate of fibrils formation. This is Decorin (DCN) from Ovis aries (Sheep).